A 912-amino-acid polypeptide reads, in one-letter code: Isoleucine--tRNA ligase (912 aa).

Positions 57-67 match the 'HIGH' region motif; sequence PYANGDIHLGT. An L-isoleucyl-5'-AMP-binding site is contributed by glutamate 549. Residues 590–594 carry the 'KMSKS' region motif; it reads KMSKS. An ATP-binding site is contributed by lysine 593. Cysteine 880, cysteine 883, cysteine 900, and cysteine 903 together coordinate Zn(2+).

The protein belongs to the class-I aminoacyl-tRNA synthetase family. IleS type 1 subfamily. Monomer. Requires Zn(2+) as cofactor.

The protein resides in the cytoplasm. It carries out the reaction tRNA(Ile) + L-isoleucine + ATP = L-isoleucyl-tRNA(Ile) + AMP + diphosphate. Its function is as follows. Catalyzes the attachment of isoleucine to tRNA(Ile). As IleRS can inadvertently accommodate and process structurally similar amino acids such as valine, to avoid such errors it has two additional distinct tRNA(Ile)-dependent editing activities. One activity is designated as 'pretransfer' editing and involves the hydrolysis of activated Val-AMP. The other activity is designated 'posttransfer' editing and involves deacylation of mischarged Val-tRNA(Ile). The chain is Isoleucine--tRNA ligase from Fervidobacterium pennivorans (strain DSM 9078 / Ven5).